The primary structure comprises 410 residues: Cytosolic isocitrate dehydrogenase [NADP] (410 aa).

NADP(+) contacts are provided by residues 77–79 (TIT) and R84. T79 is a binding site for substrate. Substrate contacts are provided by residues 96–102 (SPNGTIR), R111, and R134. K260 contacts NADP(+). D275 and D279 together coordinate Mn(2+). Residues 310–315 (GTVTRH) and N328 each bind NADP(+).

This sequence belongs to the isocitrate and isopropylmalate dehydrogenases family. It depends on Mg(2+) as a cofactor. Mn(2+) is required as a cofactor.

The protein localises to the cytoplasm. It localises to the cytosol. The catalysed reaction is D-threo-isocitrate + NADP(+) = 2-oxoglutarate + CO2 + NADPH. May supply 2-oxoglutarate for amino acid biosynthesis and ammonia assimilation via the glutamine synthetase/glutamate synthase (GS/GOGAT) pathway. May be involved in the production of NADPH to promote redox signaling or homeostasis in response to oxidative stress, or redox signaling linked to defense responses. The protein is Cytosolic isocitrate dehydrogenase [NADP] of Arabidopsis thaliana (Mouse-ear cress).